The chain runs to 321 residues: MKTIGILTSGGDAPGMNAAIRAVVRTGIYYGLKVKGIMRGFAGLVEDEVIDLGLSSVGDIIQKGGTILRTARCEEFKQKEVRKKAYETLQKHGIEGLVVIGGDGSFRGAQLLSEEWNVNTICIPGTIDNDIPCTDYTIGFDTACNTVIDAINKIRDTATSHERANIIEVMGRNSGYIALYAGVAGGAEMIILPEVEWSIDELCDKITYGIKRGKLHHIIVLAEGVMSAPELAKMIKERLPKLDLRYTILGHIQRGGAPTVMDRVLASQMGARAVELLLENKTKRVISIRNNQIVDDDIDEALSMKKEFNRKLYELSKILSI.

ATP is bound at residue glycine 11. 21–25 serves as a coordination point for ADP; the sequence is RAVVR. ATP-binding positions include 72–73 and 102–105; these read RC and GDGS. Aspartate 103 contacts Mg(2+). 126–128 serves as a coordination point for substrate; the sequence is TID. Catalysis depends on aspartate 128, which acts as the Proton acceptor. Arginine 155 provides a ligand contact to ADP. Substrate contacts are provided by residues arginine 163 and 170–172; that span reads MGR. Residues 186–188, arginine 212, and 214–216 each bind ADP; these read GAE and KLH. Residues glutamate 223, arginine 245, and 251–254 contribute to the substrate site; that span reads HIQR.

Belongs to the phosphofructokinase type A (PFKA) family. ATP-dependent PFK group I subfamily. Prokaryotic clade 'B1' sub-subfamily. As to quaternary structure, homotetramer. Requires Mg(2+) as cofactor.

It localises to the cytoplasm. The enzyme catalyses beta-D-fructose 6-phosphate + ATP = beta-D-fructose 1,6-bisphosphate + ADP + H(+). It functions in the pathway carbohydrate degradation; glycolysis; D-glyceraldehyde 3-phosphate and glycerone phosphate from D-glucose: step 3/4. Its activity is regulated as follows. Allosterically activated by ADP and other diphosphonucleosides, and allosterically inhibited by phosphoenolpyruvate. Functionally, catalyzes the phosphorylation of D-fructose 6-phosphate to fructose 1,6-bisphosphate by ATP, the first committing step of glycolysis. In Caldanaerobacter subterraneus subsp. tengcongensis (strain DSM 15242 / JCM 11007 / NBRC 100824 / MB4) (Thermoanaerobacter tengcongensis), this protein is ATP-dependent 6-phosphofructokinase.